Consider the following 196-residue polypeptide: Early light-induced protein, chloroplastic (196 aa).

Residues 1-48 constitute a chloroplast transit peptide; the sequence is MAVSSCQSIMSNSMTNISSRSRVNQFTNIPSVYIPTLRRNVSLKVRSM. The span at 47–57 shows a compositional bias: basic and acidic residues; the sequence is SMAEGEPKEQS. The interval 47-81 is disordered; the sequence is SMAEGEPKEQSKVAVDPTTPTASTPTPQPAYTRPP. Helical transmembrane passes span 105–125, 132–152, and 176–196; these read LAMI…QGLS, GVAW…IPFF, and IAML…TSLV.

The protein belongs to the ELIP/psbS family.

Its subcellular location is the plastid. The protein resides in the chloroplast membrane. Functionally, probably involved in the integration of pigments into the mature pigment-protein complexes. This Pisum sativum (Garden pea) protein is Early light-induced protein, chloroplastic.